We begin with the raw amino-acid sequence, 528 residues long: Phenylalanine--tRNA ligase alpha subunit (528 aa).

Thr-365 and Phe-444 together coordinate L-phenylalanine. Glu-446 contributes to the Mg(2+) binding site. An L-phenylalanine-binding site is contributed by Phe-469.

It belongs to the class-II aminoacyl-tRNA synthetase family. Phe-tRNA synthetase alpha subunit type 2 subfamily. In terms of assembly, tetramer of two alpha and two beta subunits. Requires Mg(2+) as cofactor.

It localises to the cytoplasm. The catalysed reaction is tRNA(Phe) + L-phenylalanine + ATP = L-phenylalanyl-tRNA(Phe) + AMP + diphosphate + H(+). This Borreliella burgdorferi (strain ATCC 35210 / DSM 4680 / CIP 102532 / B31) (Borrelia burgdorferi) protein is Phenylalanine--tRNA ligase alpha subunit.